Reading from the N-terminus, the 354-residue chain is Dihydroorotate dehydrogenase (quinone) (354 aa).

FMN contacts are provided by residues 61–65 (AGYDK) and A85. K65 lines the substrate pocket. Position 110–114 (110–114 (NRFGF)) interacts with substrate. N139 and N170 together coordinate FMN. N170 is a substrate binding site. Residue S173 is the Nucleophile of the active site. Residue N175 participates in substrate binding. FMN-binding residues include K211 and T239. 240-241 (NT) lines the substrate pocket. FMN contacts are provided by residues G261, G290, and 311–312 (YT).

This sequence belongs to the dihydroorotate dehydrogenase family. Type 2 subfamily. In terms of assembly, monomer. The cofactor is FMN.

It is found in the cell membrane. The enzyme catalyses (S)-dihydroorotate + a quinone = orotate + a quinol. It participates in pyrimidine metabolism; UMP biosynthesis via de novo pathway; orotate from (S)-dihydroorotate (quinone route): step 1/1. Catalyzes the conversion of dihydroorotate to orotate with quinone as electron acceptor. This chain is Dihydroorotate dehydrogenase (quinone), found in Cereibacter sphaeroides (strain ATCC 17023 / DSM 158 / JCM 6121 / CCUG 31486 / LMG 2827 / NBRC 12203 / NCIMB 8253 / ATH 2.4.1.) (Rhodobacter sphaeroides).